A 112-amino-acid chain; its full sequence is UPF0235 protein RHE_CH03912 (112 aa).

Belongs to the UPF0235 family.

This is UPF0235 protein RHE_CH03912 from Rhizobium etli (strain ATCC 51251 / DSM 11541 / JCM 21823 / NBRC 15573 / CFN 42).